A 518-amino-acid chain; its full sequence is Putative cytochrome P450 CYP13A6 (518 aa).

Cysteine 463 serves as a coordination point for heme.

It belongs to the cytochrome P450 family. It depends on heme as a cofactor.

In terms of biological role, cytochromes P450 are a group of heme-thiolate monooxygenases. They oxidize a variety of structurally unrelated compounds, including steroids, fatty acids, and xenobiotics. In Caenorhabditis elegans, this protein is Putative cytochrome P450 CYP13A6 (cyp-13A6).